Consider the following 234-residue polypeptide: Response regulator RppA (234 aa).

One can recognise a Response regulatory domain in the interval 2 to 118 (RILLVEDETD…ELLARLRALQ (117 aa)). Aspartate 53 bears the 4-aspartylphosphate mark. Positions 126–232 (PQILTLGNFS…VPGQGYRFTL (107 aa)) form a DNA-binding region, ompR/PhoB-type.

Interacts with histidine kinase Hik2; may accept phosphate from Hik2.

Functionally, member of two-component regulatory system RppA/RppB, involved in the establishment of the appropriate stoichiometry between the 2 photosystems. It senses changes in the plastoquinone (PQ) redox poise. Another group shows this two-component pair, renamed NrsR/NrsS, controls the nickel-dependent expression of the nrsBACD operon; they suggest the photosystem-related activities seen earlier are due to the expression of NrsS (RppB) in the absence of its natural substrate NrsR (RppA). May accept phosphate from Hik2 in a possible Hik2/RppA two-component system. This is Response regulator RppA from Synechocystis sp. (strain ATCC 27184 / PCC 6803 / Kazusa).